We begin with the raw amino-acid sequence, 438 residues long: L-cysteine:1D-myo-inositol 2-amino-2-deoxy-alpha-D-glucopyranoside ligase (438 aa).

Positions M1–G27 are disordered. C45 provides a ligand contact to Zn(2+). L-cysteinyl-5'-AMP-binding positions include C45–T48, T60, and N83–T85. A 'HIGH' region motif is present at residues I47–H57. The 'ERGGDP' region signature appears at D197–P202. W238 contacts L-cysteinyl-5'-AMP. C242 lines the Zn(2+) pocket. G260–D262 provides a ligand contact to L-cysteinyl-5'-AMP. Zn(2+) is bound at residue H267. V293 lines the L-cysteinyl-5'-AMP pocket. Positions K299 to S303 match the 'KMSKS' region motif.

This sequence belongs to the class-I aminoacyl-tRNA synthetase family. MshC subfamily. As to quaternary structure, monomer. The cofactor is Zn(2+).

The enzyme catalyses 1D-myo-inositol 2-amino-2-deoxy-alpha-D-glucopyranoside + L-cysteine + ATP = 1D-myo-inositol 2-(L-cysteinylamino)-2-deoxy-alpha-D-glucopyranoside + AMP + diphosphate + H(+). Functionally, catalyzes the ATP-dependent condensation of GlcN-Ins and L-cysteine to form L-Cys-GlcN-Ins. This chain is L-cysteine:1D-myo-inositol 2-amino-2-deoxy-alpha-D-glucopyranoside ligase, found in Kytococcus sedentarius (strain ATCC 14392 / DSM 20547 / JCM 11482 / CCUG 33030 / NBRC 15357 / NCTC 11040 / CCM 314 / 541) (Micrococcus sedentarius).